Here is a 258-residue protein sequence, read N- to C-terminus: Pyridoxine 5'-phosphate synthase (258 aa).

Asn16 serves as a coordination point for 3-amino-2-oxopropyl phosphate. 18-19 (DH) lines the 1-deoxy-D-xylulose 5-phosphate pocket. Residue Arg27 participates in 3-amino-2-oxopropyl phosphate binding. The active-site Proton acceptor is His52. Arg54 and His59 together coordinate 1-deoxy-D-xylulose 5-phosphate. Residue Glu79 is the Proton acceptor of the active site. Thr109 serves as a coordination point for 1-deoxy-D-xylulose 5-phosphate. Catalysis depends on His200, which acts as the Proton donor. 3-amino-2-oxopropyl phosphate is bound by residues Gly201 and 222–223 (GH).

The protein belongs to the PNP synthase family. As to quaternary structure, homooctamer; tetramer of dimers.

Its subcellular location is the cytoplasm. It catalyses the reaction 3-amino-2-oxopropyl phosphate + 1-deoxy-D-xylulose 5-phosphate = pyridoxine 5'-phosphate + phosphate + 2 H2O + H(+). The protein operates within cofactor biosynthesis; pyridoxine 5'-phosphate biosynthesis; pyridoxine 5'-phosphate from D-erythrose 4-phosphate: step 5/5. Functionally, catalyzes the complicated ring closure reaction between the two acyclic compounds 1-deoxy-D-xylulose-5-phosphate (DXP) and 3-amino-2-oxopropyl phosphate (1-amino-acetone-3-phosphate or AAP) to form pyridoxine 5'-phosphate (PNP) and inorganic phosphate. The sequence is that of Pyridoxine 5'-phosphate synthase from Burkholderia lata (strain ATCC 17760 / DSM 23089 / LMG 22485 / NCIMB 9086 / R18194 / 383).